The sequence spans 316 residues: tRNA-splicing endonuclease subunit Sen34 (316 aa).

The disordered stretch occupies residues 120 to 184; sequence QAAKKQKLEQ…PGPSNGVTPL (65 aa). Composition is skewed to polar residues over residues 144–159 and 168–181; these read EATQ…QPSA and LDSS…SNGV. Catalysis depends on residues Tyr-253, His-261, and Lys-292.

The protein belongs to the tRNA-intron endonuclease family. In terms of assembly, tRNA splicing endonuclease is a heterotetramer composed of TSEN2, TSEN15, TSEN34/LENG5 and TSEN54. tRNA splicing endonuclease complex also contains proteins of the pre-mRNA 3'-end processing machinery such as CLP1, CPSF1, CPSF4 and CSTF2.

It localises to the nucleus. The protein localises to the nucleolus. It carries out the reaction pretRNA = a 3'-half-tRNA molecule with a 5'-OH end + a 5'-half-tRNA molecule with a 2',3'-cyclic phosphate end + an intron with a 2',3'-cyclic phosphate and a 5'-hydroxyl terminus.. Constitutes one of the two catalytic subunit of the tRNA-splicing endonuclease complex, a complex responsible for identification and cleavage of the splice sites in pre-tRNA. It cleaves pre-tRNA at the 5'- and 3'-splice sites to release the intron. The products are an intron and two tRNA half-molecules bearing 2',3'-cyclic phosphate and 5'-OH termini. There are no conserved sequences at the splice sites, but the intron is invariably located at the same site in the gene, placing the splice sites an invariant distance from the constant structural features of the tRNA body. The tRNA splicing endonuclease is also involved in mRNA processing via its association with pre-mRNA 3'-end processing factors, establishing a link between pre-tRNA splicing and pre-mRNA 3'-end formation, suggesting that the endonuclease subunits function in multiple RNA-processing events. This is tRNA-splicing endonuclease subunit Sen34 (Tsen34) from Mus musculus (Mouse).